We begin with the raw amino-acid sequence, 199 residues long: Protein ZNRD2 (199 aa).

Residue alanine 2 is modified to N-acetylalanine. 4 residues coordinate Zn(2+): cysteine 53, cysteine 56, cysteine 70, and cysteine 73. Serine 94 bears the Phosphoserine mark. The segment at 100–125 is disordered; sequence QLASASELPLGSRPAPQPPVPRPEHC. The short motif at 173-194 is the Nuclear export signal element; it reads SLETSIQLCGLIRACAEALRSL.

Homodimer. Zn(2+) serves as cofactor.

It localises to the cytoplasm. Its function is as follows. Might play a role in mitosis. Antigenic molecule. Could be a centromere-associated protein. May induce anti-centromere antibodies. In Homo sapiens (Human), this protein is Protein ZNRD2.